We begin with the raw amino-acid sequence, 174 residues long: Protein CURVATURE THYLAKOID 1B, chloroplastic (174 aa).

The disordered stretch occupies residues 1 to 20; the sequence is MASLSVSSSSTIIDSRAPPS. Residues 1 to 63 constitute a chloroplast transit peptide; the sequence is MASLSVSSSS…RKIVRNVVTR (63 aa). Ala-64 carries the post-translational modification N-acetylalanine. Topologically, residues 64–100 are stromal; it reads ATTEVGEAPATTTEAETTELPEIVKTAQEAWEKVDDK. The helical transmembrane segment at 101–121 threads the bilayer; the sequence is YAIGSLAFAGVVALWGSAGMI. Residues 122-126 are Lumenal-facing; the sequence is SAIDR. A helical transmembrane segment spans residues 127–147; that stretch reads LPLVPGVLELVGIGYTGWFTY. The Stromal portion of the chain corresponds to 148–174; sequence KNLVFKPDREALFEKVKSTYKDILGSS.

Belongs to the CURT family. In terms of assembly, homo- and heterodimers and trimers. Interacts with PSAL. In terms of processing, phosphorylated on either Thr-65 or Thr-66 by a threonine specific thylakoid kinase.

It is found in the plastid. The protein resides in the chloroplast thylakoid membrane. Functionally, determines thylakoid architecture by inducing membrane curvature. In Arabidopsis thaliana (Mouse-ear cress), this protein is Protein CURVATURE THYLAKOID 1B, chloroplastic (CURT1B).